Consider the following 328-residue polypeptide: MNQQTTNRDTGEAAATNAPANSATSTSTPDNQPTPLDAFEVLLITGMSGAGRSHAADCVEDMGWYVVDNLPPKLLIPLVDMMTTSGSGSESGVHKLAAVIDVRSSYFDELAAVLGHLDDLGVKTRILFLDASNEVLIKRYESVRRPHPLQHGNRLIDGILEERHLLEDLKERADWVIDTSSLSIHQLSTKLYEAMLGSGPTTVAVHIFSFGFKYGMPIDADFVADVRFLPNPFWVPNLRELTGHDKPVADYVLSSKGAKEFLDAYEKAIEIALEGYAQEDKHYVTIAVGCTGGQHRSVAMSEELARRLRAHGLNVTVSAREQHKRHSS.

The disordered stretch occupies residues 1 to 35 (MNQQTTNRDTGEAAATNAPANSATSTSTPDNQPTP). Residues 13 to 29 (AAATNAPANSATSTSTP) are compositionally biased toward low complexity. Position 46-53 (46-53 (GMSGAGRS)) interacts with ATP. A GTP-binding site is contributed by 101 to 104 (DVRS).

It belongs to the RapZ-like family.

Functionally, displays ATPase and GTPase activities. The polypeptide is Nucleotide-binding protein BLD_0430 (Bifidobacterium longum (strain DJO10A)).